We begin with the raw amino-acid sequence, 87 residues long: Small ribosomal subunit protein bS18 (87 aa).

The segment at 1–21 (MRHKPTPPKGNKSLGNALASK) is disordered.

It belongs to the bacterial ribosomal protein bS18 family. In terms of assembly, part of the 30S ribosomal subunit. Forms a tight heterodimer with protein bS6.

In terms of biological role, binds as a heterodimer with protein bS6 to the central domain of the 16S rRNA, where it helps stabilize the platform of the 30S subunit. In Chlorobium phaeobacteroides (strain DSM 266 / SMG 266 / 2430), this protein is Small ribosomal subunit protein bS18.